Here is a 134-residue protein sequence, read N- to C-terminus: Small ribosomal subunit protein bS16 (134 aa).

Residues 105–134 (EAERRQKRLTAKTRRRQAKKAAEAAGSAEG) are disordered. The span at 109 to 123 (RQKRLTAKTRRRQAK) shows a compositional bias: basic residues.

The protein belongs to the bacterial ribosomal protein bS16 family.

This Chlorobaculum parvum (strain DSM 263 / NCIMB 8327) (Chlorobium vibrioforme subsp. thiosulfatophilum) protein is Small ribosomal subunit protein bS16.